A 216-amino-acid chain; its full sequence is Adenylate kinase (216 aa).

10 to 15 (GAGKGT) contacts ATP. The tract at residues 30 to 59 (STGDILRENVKKGTALGLKAKSYMDKGELV) is NMP. AMP-binding positions include threonine 31, arginine 36, 57 to 59 (ELV), 85 to 88 (GFPR), and glutamine 92. An LID region spans residues 126-163 (GRRICRSCGASYHLVFNPPKAKDLCDSCGGELYQRDDD). Arginine 127 serves as a coordination point for ATP. Residues cysteine 130 and cysteine 133 each coordinate Zn(2+). 136–137 (SY) is a binding site for ATP. Residues cysteine 150 and cysteine 153 each coordinate Zn(2+). Arginine 160 and arginine 171 together coordinate AMP. Position 199 (lysine 199) interacts with ATP.

It belongs to the adenylate kinase family. Monomer.

The protein localises to the cytoplasm. The catalysed reaction is AMP + ATP = 2 ADP. It participates in purine metabolism; AMP biosynthesis via salvage pathway; AMP from ADP: step 1/1. Its function is as follows. Catalyzes the reversible transfer of the terminal phosphate group between ATP and AMP. Plays an important role in cellular energy homeostasis and in adenine nucleotide metabolism. The sequence is that of Adenylate kinase from Methanocella arvoryzae (strain DSM 22066 / NBRC 105507 / MRE50).